The primary structure comprises 180 residues: NEDD8-conjugating enzyme ubc-12 (180 aa).

Positions 24 to 180 constitute a UBC core domain; sequence VRDKLLAQEL…RVREYISRYC (157 aa). Cysteine 112 (glycyl thioester intermediate) is an active-site residue.

The protein belongs to the ubiquitin-conjugating enzyme family. UBC12 subfamily.

It is found in the cytoplasm. It catalyses the reaction [E1 NEDD8-activating enzyme]-S-[NEDD8 protein]-yl-L-cysteine + [E2 NEDD8-conjugating enzyme]-L-cysteine = [E1 NEDD8-activating enzyme]-L-cysteine + [E2 NEDD8-conjugating enzyme]-S-[NEDD8-protein]-yl-L-cysteine.. The protein operates within protein modification; protein neddylation. Accepts the ubiquitin-like protein NEDD8 from the uba-3-ula-1 E1 complex and catalyzes its covalent attachment to other proteins. Plays a role in male tail tip morphogenesis. This Caenorhabditis elegans protein is NEDD8-conjugating enzyme ubc-12.